The primary structure comprises 674 residues: Electrogenic aspartate/glutamate antiporter SLC25A13, mitochondrial (674 aa).

An N-acetylalanine modification is found at Ala-2. The segment at Ala-2–Pro-295 is regulatory N-terminal domain. Residues Ala-2–Arg-331 are Mitochondrial intermembrane-facing. EF-hand domains follow at residues Ser-51–Cys-86, Ala-87–His-122, Gln-123–Glu-157, and Ile-158–His-193. The Ca(2+) site is built by Asp-66, Thr-68, Asp-70, Leu-72, and Glu-77. A linker loop domain region spans residues Leu-296 to Gln-311. The carrier domain stretch occupies residues Val-321–Gly-611. Solcar repeat units lie at residues Ala-326–Lys-418, Val-426–Ser-510, and Val-518–Trp-605. Residues Phe-332 to Ile-349 form a helical membrane-spanning segment. Over Asp-350–Arg-392 the chain is Mitochondrial matrix. 2 positions are modified to N6-acetyllysine: Lys-353 and Lys-372. A helical transmembrane segment spans residues Gly-393–Asn-412. At Asp-413 to Gly-435 the chain is on the mitochondrial intermembrane side. Residues Gly-436–Leu-449 form a helical membrane-spanning segment. Residues Glu-450–Lys-484 are Mitochondrial matrix-facing. Lys-453 bears the N6-methyllysine mark. The residue at position 484 (Lys-484) is an N6-acetyllysine; alternate. Lys-484 carries the N6-succinyllysine; alternate modification. A helical transmembrane segment spans residues Gly-485–Tyr-504. Over Ala-505 to Leu-523 the chain is Mitochondrial intermembrane. A helical membrane pass occupies residues Leu-524–Ala-541. Residues Asp-542–Lys-580 lie on the Mitochondrial matrix side of the membrane. Lys-580 is modified (N6-succinyllysine). Residues Gly-581–Tyr-599 form a helical membrane-spanning segment. Topologically, residues Glu-600–Pro-674 are mitochondrial intermembrane. The C-terminal domain stretch occupies residues Gly-612–Pro-674. An N6-acetyllysine modification is found at Lys-661.

Belongs to the mitochondrial carrier (TC 2.A.29) family. As to quaternary structure, homodimer (via N-terminus).

The protein resides in the mitochondrion inner membrane. It catalyses the reaction L-aspartate(in) + L-glutamate(out) + H(+)(out) = L-aspartate(out) + L-glutamate(in) + H(+)(in). The enzyme catalyses 3-sulfino-L-alanine(out) + L-glutamate(in) + H(+)(in) = 3-sulfino-L-alanine(in) + L-glutamate(out) + H(+)(out). The catalysed reaction is 3-sulfino-L-alanine(out) + L-aspartate(in) = 3-sulfino-L-alanine(in) + L-aspartate(out). Functionally, mitochondrial electrogenic aspartate/glutamate antiporter that favors efflux of aspartate and entry of glutamate and proton within the mitochondria as part of the malate-aspartate shuttle. Also mediates the uptake of L-cysteinesulfinate (3-sulfino-L-alanine) by mitochondria in exchange of L-glutamate and proton. Can also exchange L-cysteinesulfinate with aspartate in their anionic form without any proton translocation. Lacks transport activity towards gamma-aminobutyric acid (GABA). This is Electrogenic aspartate/glutamate antiporter SLC25A13, mitochondrial from Macaca fascicularis (Crab-eating macaque).